A 143-amino-acid polypeptide reads, in one-letter code: Deoxyuridine 5'-triphosphate nucleotidohydrolase (143 aa).

Residues serine 65, valine 78, arginine 132, and glycine 138 each coordinate dUMP.

The protein belongs to the dUTPase family. In terms of assembly, homotrimer. The cofactor is Mg(2+).

It catalyses the reaction dUTP + H2O = dUMP + diphosphate + H(+). It functions in the pathway pyrimidine metabolism; dUMP biosynthesis; dUMP from dCTP (dUTP route): step 2/2. Involved in nucleotide metabolism via production of dUMP, the immediate precursor of thymidine nucleotides, and decreases the intracellular concentration of dUTP so that uracil cannot be incorporated into DNA. This chain is Deoxyuridine 5'-triphosphate nucleotidohydrolase (DUT1), found in Antonospora locustae (Microsporidian parasite).